The chain runs to 263 residues: ATP synthase subunit a (263 aa).

A propeptide spans 1–14 (MYLNNNNNMKYYIN) (removed in mature form). 6 consecutive transmembrane segments (helical) span residues 35 to 57 (FSFINITNFGLYTMITLLVILTM), 95 to 117 (VWGYYFPLVYTFFITIFTMNLIS), 129 to 151 (VVFVVSMSMIIWLGTTIIGFYTH), 156 to 178 (FGLFLPTGTPLILVPLLVSIELL), 191 to 213 (LSANIMAGHLLIVILGGLLFNLM), and 228 to 250 (IAILGIVCLEFAITIIQAYVWCI).

This sequence belongs to the ATPase A chain family. In terms of assembly, F-type ATPases have 2 components, CF(1) - the catalytic core - and CF(0) - the membrane proton channel. In yeast, the dimeric form of ATP synthase consists of 18 polypeptides: alpha, beta, gamma, delta, epsilon, 4 (B), 5 (OSCP), 6 (A), 8, 9 (C), d, E (Tim11), f, g, h, i, j and k.

The protein localises to the mitochondrion inner membrane. In terms of biological role, mitochondrial membrane ATP synthase (F(1)F(0) ATP synthase or Complex V) produces ATP from ADP in the presence of a proton gradient across the membrane which is generated by electron transport complexes of the respiratory chain. F-type ATPases consist of two structural domains, F(1) - containing the extramembraneous catalytic core and F(0) - containing the membrane proton channel, linked together by a central stalk and a peripheral stalk. During catalysis, ATP synthesis in the catalytic domain of F(1) is coupled via a rotary mechanism of the central stalk subunits to proton translocation. Key component of the proton channel; it may play a direct role in the translocation of protons across the membrane. This Eremothecium gossypii (strain ATCC 10895 / CBS 109.51 / FGSC 9923 / NRRL Y-1056) (Yeast) protein is ATP synthase subunit a (ATP6).